The following is a 124-amino-acid chain: Protein archease (124 aa).

H7, D10, D123, and T124 together coordinate Ca(2+).

The protein belongs to the archease family.

Its function is as follows. Activates the tRNA-splicing ligase complex by facilitating the enzymatic turnover of catalytic subunit RtcB. Acts by promoting the guanylylation of RtcB, a key intermediate step in tRNA ligation. Can also alter the NTP specificity of RtcB such that ATP, dGTP or ITP is used efficiently. May also act as a chaperone or modulator of proteins involved in DNA or RNA processing. This is Protein archease from Thermotoga maritima (strain ATCC 43589 / DSM 3109 / JCM 10099 / NBRC 100826 / MSB8).